The sequence spans 571 residues: Phototropic-responsive NPH3 family protein NPY1 (571 aa).

A BTB domain is found at 29–97; that stretch reads SDVTIHVGEV…CYGMTVTLNA (69 aa). Residues 210–468 form the NPH3 domain; the sequence is DWWVEDVCEL…VQVLYFEQLR (259 aa). A Phosphotyrosine modification is found at tyrosine 409. A disordered region spans residues 475–571; it reads ASVAASSHSP…SSRRRRHSIS (97 aa). Basic and acidic residues predominate over residues 484 to 504; that stretch reads PVEKTEENKGEEATKKVELSK. Positions 540 to 562 are enriched in low complexity; sequence SNKSSEVSSGSSQSPPAKSSSSS.

The protein belongs to the NPH3 family. In terms of assembly, component of a complex made of PINs (e.g. PIN1 and PIN2), MAB4/MELs (e.g. NPY1/MAB4 and NPY5/MEL1) and AGC kinases (e.g. D6PK and PID) at the plasma membrane. Binds directly to PIN2 and PID. As to expression, accumulates in organ primordia such as cotyledons, leaves and floral organs. Expressed mainly in the apical regions of embryos including cotyledon tips and the apical meristem. Induced by the transcription factor ARF5/MP at the periphery of inflorescence meristems. Highly expressed in primary root tips and radicles.

It is found in the late endosome. The protein resides in the cell membrane. It localises to the cytoplasm. The protein localises to the cytosol. It participates in protein modification; protein ubiquitination. In terms of biological role, may act as a substrate-specific adapter of an E3 ubiquitin-protein ligase complex (CUL3-RBX1-BTB) which mediates the ubiquitination and subsequent proteasomal degradation of target proteins. Coregulates with PID the auxin-mediated plant organogenesis. Regulates basipetal PIN proteins (e.g. PIN1) polarization to establish inward auxin transport from the L1 surface of incipient organ primordia; this process is essential for the progression of flower organs development. Recruited to the plasma membrane by PINs (e.g. PIN1 and PIN2) and, in concert with AGC kinases-mediated (e.g. D6PK and PID) PINs phosphorylation, maintains their cell polarity (apical or basal) through limiting lateral diffusion-based escape. Induces auxin response in inner cell layers through a shift in PIN1 localization. Influences cotyledon development by regulating auxin distribution mainly in the protodermal cell layer. May play an essential role in root gravitropic responses. The chain is Phototropic-responsive NPH3 family protein NPY1 from Arabidopsis thaliana (Mouse-ear cress).